A 254-amino-acid chain; its full sequence is 3-beta-hydroxysteroid dehydrogenase (254 aa).

NAD(+) is bound by residues 12-40 (VTGG…SDIN) and Asp61. Ser139 contacts substrate. The active-site Proton acceptor is Tyr152. Lys156 serves as a coordination point for NAD(+).

The protein belongs to the short-chain dehydrogenases/reductases (SDR) family. Homotetramer.

It catalyses the reaction testosterone + NAD(+) = androst-4-ene-3,17-dione + NADH + H(+). The enzyme catalyses testosterone + NADP(+) = androst-4-ene-3,17-dione + NADPH + H(+). The polypeptide is 3-beta-hydroxysteroid dehydrogenase (Comamonas testosteroni (Pseudomonas testosteroni)).